Reading from the N-terminus, the 535-residue chain is KNR4/SMI1 homolog (535 aa).

Residues 354–363 are compositionally biased toward basic and acidic residues; the sequence is ERKLPEEPKR. The disordered stretch occupies residues 354 to 535; the sequence is ERKLPEEPKR…LKDDFENVAL (182 aa). 3 stretches are compositionally biased toward polar residues: residues 364–384, 397–407, and 456–469; these read TVSSSQGSQNTVEPAEQQETA, TSLSVDNTGTK, and ESTNAVENTETSQE. The segment covering 474-483 has biased composition (basic and acidic residues); sequence TSEKPEEKPK. A compositionally biased stretch (basic residues) spans 484 to 494; it reads KQSKKASKKKG. Composition is skewed to basic and acidic residues over residues 495-509 and 524-535; these read KKDEKKDTDSKTKEP and EKLKDDFENVAL.

It belongs to the KNR4/SMI1 family.

The sequence is that of KNR4/SMI1 homolog from Kluyveromyces lactis (strain ATCC 8585 / CBS 2359 / DSM 70799 / NBRC 1267 / NRRL Y-1140 / WM37) (Yeast).